The following is a 161-amino-acid chain: 2-C-methyl-D-erythritol 2,4-cyclodiphosphate synthase (161 aa).

A divalent metal cation is bound by residues Asp11 and His13. 4-CDP-2-C-methyl-D-erythritol 2-phosphate contacts are provided by residues 11-13 (DIH) and 37-38 (HS). Residue His45 participates in a divalent metal cation binding. 4-CDP-2-C-methyl-D-erythritol 2-phosphate-binding positions include 59–61 (DIG) and 135–138 (TTNE).

This sequence belongs to the IspF family. As to quaternary structure, homotrimer. A divalent metal cation is required as a cofactor.

It carries out the reaction 4-CDP-2-C-methyl-D-erythritol 2-phosphate = 2-C-methyl-D-erythritol 2,4-cyclic diphosphate + CMP. It participates in isoprenoid biosynthesis; isopentenyl diphosphate biosynthesis via DXP pathway; isopentenyl diphosphate from 1-deoxy-D-xylulose 5-phosphate: step 4/6. In terms of biological role, involved in the biosynthesis of isopentenyl diphosphate (IPP) and dimethylallyl diphosphate (DMAPP), two major building blocks of isoprenoid compounds. Catalyzes the conversion of 4-diphosphocytidyl-2-C-methyl-D-erythritol 2-phosphate (CDP-ME2P) to 2-C-methyl-D-erythritol 2,4-cyclodiphosphate (ME-CPP) with a corresponding release of cytidine 5-monophosphate (CMP). The sequence is that of 2-C-methyl-D-erythritol 2,4-cyclodiphosphate synthase from Acaryochloris marina (strain MBIC 11017).